Consider the following 156-residue polypeptide: Endoribonuclease YbeY (156 aa).

Residues His117, His121, and His127 each coordinate Zn(2+).

This sequence belongs to the endoribonuclease YbeY family. The cofactor is Zn(2+).

The protein localises to the cytoplasm. Functionally, single strand-specific metallo-endoribonuclease involved in late-stage 70S ribosome quality control and in maturation of the 3' terminus of the 16S rRNA. This chain is Endoribonuclease YbeY, found in Shewanella frigidimarina (strain NCIMB 400).